We begin with the raw amino-acid sequence, 1436 residues long: Pleiotropic drug resistance protein 1 (1436 aa).

One can recognise an ABC transporter 1 domain in the interval 165–438; it reads LDSIHILPSK…FESMGFKCPE (274 aa). ATP is bound at residue 198–205; it reads GPPGSGKT. Residues 516-729 enclose the ABC transmembrane type-2 1 domain; sequence QLLKVCTERE…SVNAILVNEF (214 aa). Transmembrane regions (helical) follow at residues 534–554, 567–587, 622–642, 653–673, 679–699, 707–727, and 764–784; these read FVYL…MTIF, GGIY…NGLS, IPVT…VMGF, FLLL…IAAV, VAST…GFIL, WWIW…ILVN, and IGVG…SVAL. Positions 796–826 are disordered; sequence TISDESENNESESSPQITSTQEGDSASENKK. Residues 810 to 821 show a composition bias toward polar residues; the sequence is PQITSTQEGDSA. Positions 838–1090 constitute an ABC transporter 2 domain; that stretch reads ITFDEVVYSV…HLIKYFESIP (253 aa). 883–890 is a binding site for ATP; sequence GVSGAGKT. The region spanning 1163–1377 is the ABC transmembrane type-2 2 domain; the sequence is TQCMACLWKQ…TLYGLVASQF (215 aa). A run of 7 helical transmembrane segments spans residues 1184–1204, 1214–1234, 1270–1290, 1301–1321, 1327–1347, 1358–1378, and 1408–1428; these read AVRL…FWDI, LVNA…QNSS, IPYI…MIGF, FFFM…TVAV, VASI…GFIV, WYYW…SQFG, and VVAA…ALGI.

The protein belongs to the ABC transporter superfamily. ABCG family. PDR (TC 3.A.1.205) subfamily. In terms of tissue distribution, roots, petals and leaf epidermis, where it is confined to glandular trichomes (at protein level).

The protein localises to the cell membrane. Its function is as follows. Excretes secondary metabolites such as terpenes. Involved in both constitutive and jasmonic acid-dependent induced defense. Confers some resistance to sclareol and B.cinerea. This is Pleiotropic drug resistance protein 1 (PDR1) from Nicotiana plumbaginifolia (Leadwort-leaved tobacco).